The following is a 193-amino-acid chain: Ancillary SecYEG translocon subunit (193 aa).

Residues 1 to 8 (MLNISKKN) lie on the Cytoplasmic side of the membrane. Residues 9-29 (IIFFILFFLIISLILFNWKYF) traverse the membrane as a helical segment. Residues 30 to 193 (SLVNKENLES…MKLNELKEQN (164 aa)) lie on the Periplasmic side of the membrane.

Belongs to the YfgM family. As to quaternary structure, interacts with the SecYEG translocon. Forms a complex with PpiD.

It is found in the cell inner membrane. Functionally, may mediate protein transfer from the SecYEG translocon to the periplasmic chaperone network via its periplasmic C-terminal region. This chain is Ancillary SecYEG translocon subunit, found in Buchnera aphidicola subsp. Acyrthosiphon pisum (strain APS) (Acyrthosiphon pisum symbiotic bacterium).